Consider the following 302-residue polypeptide: Probable protein ABIL4 (302 aa).

Disordered regions lie at residues 151–179 and 220–256; these read PSTGHKRTQAARLQTDNGQDSKPKPYPSA and LLGKDIPASPMHKPLQPNGNTSFDAKKNVGSKDQPGF. The segment covering 161-170 has biased composition (polar residues); sequence ARLQTDNGQD.

It belongs to the ABI family. As to quaternary structure, binds SCAR.

The protein localises to the cytoplasm. The protein resides in the cytoskeleton. Functionally, involved in regulation of actin and microtubule organization. Part of a WAVE complex that activates the Arp2/3 complex. This is Probable protein ABIL4 from Oryza sativa subsp. japonica (Rice).